The following is a 122-amino-acid chain: Large ribosomal subunit protein uL18 (122 aa).

A compositionally biased stretch (basic residues) spans 1-16; it reads MFKKVDRKASRQKKQM. Residues 1–29 are disordered; that stretch reads MFKKVDRKASRQKKQMSIRNKISGTPERP.

The protein belongs to the universal ribosomal protein uL18 family. In terms of assembly, part of the 50S ribosomal subunit; part of the 5S rRNA/L5/L18/L25 subcomplex. Contacts the 5S and 23S rRNAs.

Functionally, this is one of the proteins that bind and probably mediate the attachment of the 5S RNA into the large ribosomal subunit, where it forms part of the central protuberance. This is Large ribosomal subunit protein uL18 from Fusobacterium nucleatum subsp. nucleatum (strain ATCC 25586 / DSM 15643 / BCRC 10681 / CIP 101130 / JCM 8532 / KCTC 2640 / LMG 13131 / VPI 4355).